An 800-amino-acid polypeptide reads, in one-letter code: Nucleolar RNA helicase 2-B (800 aa).

Over residues 1–14 the composition is skewed to basic and acidic residues; the sequence is MPGKVYTDEMEGKS. Residues 1–200 form a disordered region; the sequence is MPGKVYTDEM…TDTSEITAAN (200 aa). Residues 114-124 are compositionally biased toward polar residues; sequence ETNISLSSQGG. Residues 221–249 carry the Q motif motif; sequence GDFSKFPISKDTIKNLQAKGVTYLFPIQS. Positions 252–431 constitute a Helicase ATP-binding domain; it reads FHTVYSGKDV…KKYMRKQYEK (180 aa). Position 265 to 272 (265 to 272) interacts with ATP; that stretch reads ARTGTGKT. The DEAD box signature appears at 374–377; that stretch reads DEVD. The Helicase C-terminal domain maps to 464 to 620; that stretch reads DIVQVYSGSH…SSADAIKSLD (157 aa). Positions 750-800 are disordered; the sequence is IQESERSFDGPRNRSFGGRGRRPFDRRNNSRNSSGGGGGRRGRSGGFRRGR. Residues 752–761 show a composition bias toward basic and acidic residues; sequence ESERSFDGPR. Basic residues predominate over residues 789-800; that stretch reads RRGRSGGFRRGR.

It belongs to the DEAD box helicase family. DDX21/DDX50 subfamily. Widely expressed. Expressed at higher level in stomach. Expressed at lower level compared to ddx21-a.

Its subcellular location is the nucleus. It localises to the nucleolus. It is found in the nucleoplasm. The protein resides in the cytoplasm. The protein localises to the cytosol. Its subcellular location is the mitochondrion. The enzyme catalyses ATP + H2O = ADP + phosphate + H(+). RNA helicase that acts as a sensor of the transcriptional status of both RNA polymerase (Pol) I and II: promotes ribosomal RNA (rRNA) processing and transcription from polymerase II (Pol II). Binds various RNAs, such as rRNAs, snoRNAs, 7SK and, at lower extent, mRNAs. In the nucleolus, localizes to rDNA locus, where it directly binds rRNAs and snoRNAs, and promotes rRNA transcription, processing and modification. Required for rRNA 2'-O-methylation, possibly by promoting the recruitment of late-acting snoRNAs SNORD56 and SNORD58 with pre-ribosomal complexes. In the nucleoplasm, binds 7SK RNA and is recruited to the promoters of Pol II-transcribed genes: acts by facilitating the release of P-TEFb from inhibitory 7SK snRNP in a manner that is dependent on its helicase activity, thereby promoting transcription of its target genes. Required to prevent R-loop-associated DNA damage and transcription-associated genomic instability. The chain is Nucleolar RNA helicase 2-B (ddx21-b) from Xenopus laevis (African clawed frog).